The chain runs to 321 residues: Lipoyl synthase (321 aa).

7 residues coordinate [4Fe-4S] cluster: Cys-68, Cys-73, Cys-79, Cys-94, Cys-98, Cys-101, and Ser-308. The Radical SAM core domain maps to 80–297 (FNHGTATFMI…KAEALAMGFT (218 aa)).

The protein belongs to the radical SAM superfamily. Lipoyl synthase family. Requires [4Fe-4S] cluster as cofactor.

The protein localises to the cytoplasm. The catalysed reaction is [[Fe-S] cluster scaffold protein carrying a second [4Fe-4S](2+) cluster] + N(6)-octanoyl-L-lysyl-[protein] + 2 oxidized [2Fe-2S]-[ferredoxin] + 2 S-adenosyl-L-methionine + 4 H(+) = [[Fe-S] cluster scaffold protein] + N(6)-[(R)-dihydrolipoyl]-L-lysyl-[protein] + 4 Fe(3+) + 2 hydrogen sulfide + 2 5'-deoxyadenosine + 2 L-methionine + 2 reduced [2Fe-2S]-[ferredoxin]. It functions in the pathway protein modification; protein lipoylation via endogenous pathway; protein N(6)-(lipoyl)lysine from octanoyl-[acyl-carrier-protein]: step 2/2. In terms of biological role, catalyzes the radical-mediated insertion of two sulfur atoms into the C-6 and C-8 positions of the octanoyl moiety bound to the lipoyl domains of lipoate-dependent enzymes, thereby converting the octanoylated domains into lipoylated derivatives. The polypeptide is Lipoyl synthase (Edwardsiella ictaluri (strain 93-146)).